The primary structure comprises 359 residues: Peroxisome assembly protein 12 (359 aa).

The Peroxisomal matrix segment spans residues 1-19; the sequence is MAEHGAHFTAASVADDQPS. Residues 20-47 form a helical membrane-spanning segment; sequence IFEVVAQDSLMTAVRPALQHVVKVLAES. The Cytoplasmic portion of the chain corresponds to 48-51; the sequence is NPTH. The chain crosses the membrane as a helical span at residues 52-76; sequence YGFLWRWFDEIFTLLDLLLQQHYLS. Residues 77 to 109 lie on the Peroxisomal matrix side of the membrane; sequence RTSASFSENFYGLKRIVMGDTHKSQRLASAGLP. The chain crosses the membrane as a helical span at residues 110-139; the sequence is KQQLWKSIMFLVLLPYLKVKLEKLVSSLRE. Residues 140–144 are Cytoplasmic-facing; the sequence is EDEYS. The chain crosses the membrane as a helical span at residues 145 to 183; the sequence is IHPPSSRWKRFYRAFLAAYPFVNMAWEGWFLVQQLRYIL. Topologically, residues 184-249 are peroxisomal matrix; sequence GKAQHHSPLL…VGGVALSLST (66 aa). Residues 250 to 277 form a helical membrane-spanning segment; that stretch reads GLSVGVFFLQFLDWWYSSENQETIKSLT. At 278–359 the chain is on the cytoplasmic side; it reads ALPTPPPPVH…HLIKLYSPEN (82 aa). Residues cysteine 304, cysteine 307, cysteine 325, and cysteine 328 each coordinate Zn(2+). An RING-type; degenerate zinc finger spans residues 304-343; it reads CPLCRKTRVNDTVLATSGYVFCYRCVFHYVRSHQACPITG.

This sequence belongs to the pex2/pex10/pex12 family. As to quaternary structure, component of the PEX2-PEX10-PEX12 retrotranslocation channel, composed of PEX2, PEX10 and PEX12. Interacts with PEX19 via its cytoplasmic domain.

It localises to the peroxisome membrane. It participates in protein modification; protein ubiquitination. Its function is as follows. Component of a retrotranslocation channel required for peroxisome organization by mediating export of the PEX5 receptor from peroxisomes to the cytosol, thereby promoting PEX5 recycling. The retrotranslocation channel is composed of PEX2, PEX10 and PEX12; each subunit contributing transmembrane segments that coassemble into an open channel that specifically allows the passage of PEX5 through the peroxisomal membrane. PEX12 also regulates PEX5 recycling by activating the E3 ubiquitin-protein ligase activity of PEX10. When PEX5 recycling is compromised, PEX12 stimulates PEX10-mediated polyubiquitination of PEX5, leading to its subsequent degradation. The protein is Peroxisome assembly protein 12 of Homo sapiens (Human).